The chain runs to 90 residues: MSEEKIEVKETDMEDPQRDMVISVVREAQRLYNIDKDVAAFVKEELDKKFGATWHVICGKCFGSRVSYEMGHFILLKCNKVNVMIYKCGY.

The protein belongs to the dynein light chain family.

The protein localises to the cytoplasm. Its subcellular location is the cytoskeleton. Functionally, acts as one of several non-catalytic accessory components of a dynein complex. This chain is Probable dynein light chain 2, cytoplasmic (dlc-2), found in Caenorhabditis elegans.